The chain runs to 204 residues: Octanoyltransferase (204 aa).

Residues 27–202 enclose the BPL/LPL catalytic domain; it reads QGGEEALLLL…RFQPLLNLHL (176 aa). Substrate is bound by residues 65-72, 132-134, and 145-147; these read RGGDVTYH, SIG, and GFA. C163 (acyl-thioester intermediate) is an active-site residue.

This sequence belongs to the LipB family.

The protein resides in the cytoplasm. The catalysed reaction is octanoyl-[ACP] + L-lysyl-[protein] = N(6)-octanoyl-L-lysyl-[protein] + holo-[ACP] + H(+). The protein operates within protein modification; protein lipoylation via endogenous pathway; protein N(6)-(lipoyl)lysine from octanoyl-[acyl-carrier-protein]: step 1/2. In terms of biological role, catalyzes the transfer of endogenously produced octanoic acid from octanoyl-acyl-carrier-protein onto the lipoyl domains of lipoate-dependent enzymes. Lipoyl-ACP can also act as a substrate although octanoyl-ACP is likely to be the physiological substrate. The chain is Octanoyltransferase from Citrifermentans bemidjiense (strain ATCC BAA-1014 / DSM 16622 / JCM 12645 / Bem) (Geobacter bemidjiensis).